We begin with the raw amino-acid sequence, 288 residues long: MKGIILAGGSGTRLYPITRGVSKQLLPVYDKPMIYYPLSVLMLAGIRDILVITAPEDNASFKRLLGDGSDFGISISYAVQPSPDGLAQAFIIGEEFIGNDNVCLVLGDNIFYGQSFTQTLKQAAAQTHGATVFAYQVKNPERFGVVEFNENFRAVSIEEKPQRPKSDWAVTGLYFYDNRAVEFAKQLKPSARGELEISDLNRMYLEDGSLSVQILGRGFAWLDTGTHESLHEAASFVQTVQNIQNLHIACLEEIAWRNGWLSDEKLEELARTMAKNQYGQYLLRLLKK.

The Mg(2+) site is built by D108 and D223.

This sequence belongs to the glucose-1-phosphate thymidylyltransferase family. In terms of assembly, homotetramer. The cofactor is Mg(2+).

The enzyme catalyses dTTP + alpha-D-glucose 1-phosphate + H(+) = dTDP-alpha-D-glucose + diphosphate. Functionally, catalyzes the formation of dTDP-glucose, from dTTP and glucose 1-phosphate, as well as its pyrophosphorolysis. In Neisseria meningitidis serogroup A / serotype 4A (strain DSM 15465 / Z2491), this protein is Glucose-1-phosphate thymidylyltransferase (rmlA1).